Here is a 349-residue protein sequence, read N- to C-terminus: Phenylalanine--tRNA ligase alpha subunit (349 aa).

Position 262 (Glu-262) interacts with Mg(2+).

Belongs to the class-II aminoacyl-tRNA synthetase family. Phe-tRNA synthetase alpha subunit type 1 subfamily. Tetramer of two alpha and two beta subunits. Mg(2+) is required as a cofactor.

It is found in the cytoplasm. It carries out the reaction tRNA(Phe) + L-phenylalanine + ATP = L-phenylalanyl-tRNA(Phe) + AMP + diphosphate + H(+). This chain is Phenylalanine--tRNA ligase alpha subunit, found in Sorangium cellulosum (strain So ce56) (Polyangium cellulosum (strain So ce56)).